The following is a 282-amino-acid chain: Phosphatidylserine decarboxylase proenzyme (282 aa).

Residues Asp-88, His-144, and Ser-247 each act as charge relay system; for autoendoproteolytic cleavage activity in the active site. The active-site Schiff-base intermediate with substrate; via pyruvic acid; for decarboxylase activity is the Ser-247. Ser-247 is modified (pyruvic acid (Ser); by autocatalysis).

This sequence belongs to the phosphatidylserine decarboxylase family. PSD-B subfamily. Prokaryotic type I sub-subfamily. As to quaternary structure, heterodimer of a large membrane-associated beta subunit and a small pyruvoyl-containing alpha subunit. Requires pyruvate as cofactor. In terms of processing, is synthesized initially as an inactive proenzyme. Formation of the active enzyme involves a self-maturation process in which the active site pyruvoyl group is generated from an internal serine residue via an autocatalytic post-translational modification. Two non-identical subunits are generated from the proenzyme in this reaction, and the pyruvate is formed at the N-terminus of the alpha chain, which is derived from the carboxyl end of the proenzyme. The autoendoproteolytic cleavage occurs by a canonical serine protease mechanism, in which the side chain hydroxyl group of the serine supplies its oxygen atom to form the C-terminus of the beta chain, while the remainder of the serine residue undergoes an oxidative deamination to produce ammonia and the pyruvoyl prosthetic group on the alpha chain. During this reaction, the Ser that is part of the protease active site of the proenzyme becomes the pyruvoyl prosthetic group, which constitutes an essential element of the active site of the mature decarboxylase.

It localises to the cell membrane. The enzyme catalyses a 1,2-diacyl-sn-glycero-3-phospho-L-serine + H(+) = a 1,2-diacyl-sn-glycero-3-phosphoethanolamine + CO2. Its pathway is phospholipid metabolism; phosphatidylethanolamine biosynthesis; phosphatidylethanolamine from CDP-diacylglycerol: step 2/2. Catalyzes the formation of phosphatidylethanolamine (PtdEtn) from phosphatidylserine (PtdSer). This is Phosphatidylserine decarboxylase proenzyme from Xanthomonas campestris pv. campestris (strain B100).